A 234-amino-acid chain; its full sequence is MSFVARSLIRNVPLMGKAILSQQKQIAARLLHQTAPLAAVRVQQPAPDFKGLAVVDNSFQEVKLEDYRGKYLVLFFYPLDFTFVCPTEIVAFSERIKEFHDINTEVLGVSVDSHFSHLTWCNVDRKNGGVGQLKYPLLSDLTKKISADYDVLLDKEGISLRGTFIIDPNGILRQYSINDLPVGRSVDEVLRLIKAFQFVEQHGEVCPANWNPNSNPATIKPDVEESKKYFSKHG.

Residues 1–30 (MSFVARSLIRNVPLMGKAILSQQKQIAARL) constitute a mitochondrion transit peptide. Positions 40-198 (VRVQQPAPDF…VLRLIKAFQF (159 aa)) constitute a Thioredoxin domain. Catalysis depends on Cys85, which acts as the Cysteine sulfenic acid (-SOH) intermediate.

This sequence belongs to the peroxiredoxin family. AhpC/Prx1 subfamily. As to quaternary structure, homodimer; disulfide-linked, upon oxidation. 6 homodimers assemble to form a ring-like dodecamer. Also exists as a monomer, however the monomeric form is present at a much lower level than the homodimeric form. In terms of tissue distribution, expressed in thoracic flight muscles (at protein level). Detected in the head and body (at protein level).

The protein localises to the mitochondrion. It carries out the reaction a hydroperoxide + [thioredoxin]-dithiol = an alcohol + [thioredoxin]-disulfide + H2O. In terms of biological role, thiol-specific peroxidase that catalyzes the reduction of hydrogen peroxide and organic hydroperoxides to water and alcohols, respectively. Plays a role in cell protection against oxidative stress by detoxifying peroxides. May be involved in aging-associated changes in the responsiveness to oxidative stress. Involved in the maintenance of global thiol redox homeostasis. Functions in the central nervous system (CNS) and in motor neurons and is essential for normal motor function. The polypeptide is Thioredoxin-dependent peroxide reductase, mitochondrial (Drosophila melanogaster (Fruit fly)).